The chain runs to 59 residues: Large ribosomal subunit protein bL32 (59 aa).

It belongs to the bacterial ribosomal protein bL32 family.

This Thermodesulfovibrio yellowstonii (strain ATCC 51303 / DSM 11347 / YP87) protein is Large ribosomal subunit protein bL32.